We begin with the raw amino-acid sequence, 600 residues long: Methionine--tRNA ligase (600 aa).

Positions 11–21 (PYANGPRHIGH) match the 'HIGH' region motif. Positions 143, 146, 156, and 159 each coordinate Zn(2+). A 'KMSKS' region motif is present at residues 350–354 (QFSSS). Ser353 lines the ATP pocket.

This sequence belongs to the class-I aminoacyl-tRNA synthetase family. MetG type 1 subfamily. In terms of assembly, monomer. Zn(2+) is required as a cofactor.

Its subcellular location is the cytoplasm. It catalyses the reaction tRNA(Met) + L-methionine + ATP = L-methionyl-tRNA(Met) + AMP + diphosphate. In terms of biological role, is required not only for elongation of protein synthesis but also for the initiation of all mRNA translation through initiator tRNA(fMet) aminoacylation. This is Methionine--tRNA ligase from Kineococcus radiotolerans (strain ATCC BAA-149 / DSM 14245 / SRS30216).